Consider the following 308-residue polypeptide: Bifunctional protein FolD (308 aa).

Residues Gly171 to Ser173, Ser198, and Ile239 each bind NADP(+).

Belongs to the tetrahydrofolate dehydrogenase/cyclohydrolase family. In terms of assembly, homodimer.

The enzyme catalyses (6R)-5,10-methylene-5,6,7,8-tetrahydrofolate + NADP(+) = (6R)-5,10-methenyltetrahydrofolate + NADPH. The catalysed reaction is (6R)-5,10-methenyltetrahydrofolate + H2O = (6R)-10-formyltetrahydrofolate + H(+). It functions in the pathway one-carbon metabolism; tetrahydrofolate interconversion. In terms of biological role, catalyzes the oxidation of 5,10-methylenetetrahydrofolate to 5,10-methenyltetrahydrofolate and then the hydrolysis of 5,10-methenyltetrahydrofolate to 10-formyltetrahydrofolate. The sequence is that of Bifunctional protein FolD from Borreliella burgdorferi (strain ATCC 35210 / DSM 4680 / CIP 102532 / B31) (Borrelia burgdorferi).